The primary structure comprises 1323 residues: Tetratricopeptide repeat protein 21 homolog (1323 aa).

17 TPR repeats span residues valine 56–serine 89, glutamate 411–methionine 444, serine 580–glutamate 613, histidine 667–phenylalanine 700, leucine 702–proline 735, glycine 736–aspartate 768, glutamine 770–lysine 802, methionine 804–proline 835, isoleucine 845–isoleucine 878, alanine 892–aspartate 925, lysine 927–asparagine 959, glutamate 961–histidine 993, histidine 995–cysteine 1027, alanine 1031–valine 1064, glutamate 1203–serine 1236, arginine 1238–lysine 1270, and cysteine 1272–tyrosine 1305.

It belongs to the TTC21 family.

In Caenorhabditis briggsae, this protein is Tetratricopeptide repeat protein 21 homolog.